We begin with the raw amino-acid sequence, 152 residues long: Endoribonuclease YbeY (152 aa).

Residues His-116, His-120, and His-126 each coordinate Zn(2+).

The protein belongs to the endoribonuclease YbeY family. Zn(2+) serves as cofactor.

The protein localises to the cytoplasm. Its function is as follows. Single strand-specific metallo-endoribonuclease involved in late-stage 70S ribosome quality control and in maturation of the 3' terminus of the 16S rRNA. The sequence is that of Endoribonuclease YbeY from Mycoplasma mobile (strain ATCC 43663 / 163K / NCTC 11711) (Mesomycoplasma mobile).